The sequence spans 464 residues: MMRSSTLKLRNKMLKVSDIIQIKIDKIVFGGEGLGYYNGFAVFVPMSIPEDELEIEIISIKKTYARGLIKNIIKASPERIDNHKFTFEDFYGCDFAMLKYESQLKYKRFMVEEVIRKIAGLSDIEISDVLASEDIYNYRNKIIEPFSVYANKIITGFFKRKSHEVFEVDENILNSKLGNKIIKELKEILNKNKISVYDENTHKGILRNIMIRTNSNNEAMVVLIINSNKITENIKKLLFKLRENIEEIKSIYISLNSKKTNTVIGEKNILIYGEKSIKENINRIEFHISPTSFFQINVKQAKRLYDIAISFFDNIDNKYIVDAYSGTGTIGMIIAKKAKKVYAIEIVKSASEDGEKTAKENGIENIEFINGAVEKELVKLVNNNQKIDTIIFDPPRKGLETSIIDKVAELNLKEVVYISCNPSTFARDVKLFSEKGYVLKKLQAVDMFPQTSHIECVGLIERKI.

The 59-residue stretch at 13–71 folds into the TRAM domain; it reads MLKVSDIIQIKIDKIVFGGEGLGYYNGFAVFVPMSIPEDELEIEIISIKKTYARGLIKN. Positions 295, 324, 345, and 393 each coordinate S-adenosyl-L-methionine. The active-site Nucleophile is C420.

This sequence belongs to the class I-like SAM-binding methyltransferase superfamily. RNA M5U methyltransferase family.

This is an uncharacterized protein from Fusobacterium nucleatum subsp. nucleatum (strain ATCC 25586 / DSM 15643 / BCRC 10681 / CIP 101130 / JCM 8532 / KCTC 2640 / LMG 13131 / VPI 4355).